Here is a 348-residue protein sequence, read N- to C-terminus: Rhodopsin (348 aa).

Met1 bears the N-acetylmethionine mark. Residues 1–36 are Extracellular-facing; it reads MNGTEGLNFYVPFSNKTGVVRSPFEYPQYYLAEPWQ. 2 N-linked (GlcNAc...) asparagine glycosylation sites follow: Asn2 and Asn15. Residues 37–61 form a helical membrane-spanning segment; the sequence is FSVLAAYMFLLIVLGFPINFLTLYV. Residues 62–73 are Cytoplasmic-facing; sequence TVQHKKLRTPLN. Residues 74 to 99 form a helical membrane-spanning segment; it reads YILLNLAVANLFMVFGGFTTTLYTSL. Residues 100–111 lie on the Extracellular side of the membrane; sequence HAYFVFGPTGCN. An intrachain disulfide couples Cys110 to Cys187. A helical transmembrane segment spans residues 112 to 133; the sequence is LEGFFATLGGEIALWSLVVLAI. A 'Ionic lock' involved in activated form stabilization motif is present at residues 134 to 136; the sequence is ERY. The Cytoplasmic segment spans residues 134-152; it reads ERYVVVCKPMSNFRFGENH. Residues 153–173 form a helical membrane-spanning segment; it reads AIMGLALTWIMAMACAAAPLV. At 174–202 the chain is on the extracellular side; the sequence is GWSRYIPEGMQCSCGIDYYTSRQEVNNES. Zn(2+) is bound at residue Glu201. A helical membrane pass occupies residues 203–227; the sequence is FVIYMFVVHFTIPLVIIFFCYGQLV. At 228–252 the chain is on the cytoplasmic side; that stretch reads FTVKEAAAQQQESATTQKAEKEVTR. The chain crosses the membrane as a helical span at residues 253 to 274; sequence MVIIMVVAFLICWVPYASVAFY. Over 275-286 the chain is Extracellular; sequence IFTHQGSDFGPI. Gln279 lines the Zn(2+) pocket. Residues 287-306 traverse the membrane as a helical segment; that stretch reads FMTIPSFFAKSSSIYNPVIY. At Lys296 the chain carries N6-(retinylidene)lysine. At 307–348 the chain is on the cytoplasmic side; the sequence is IMMNKQFRNCMLTTLCCGRNPLGDDEASTTASKTETSQVAPA. Residues Cys322 and Cys323 are each lipidated (S-palmitoyl cysteine). Ser334 carries the post-translational modification Phosphoserine. 2 positions are modified to phosphothreonine: Thr335 and Thr336. Ser338 carries the post-translational modification Phosphoserine. 2 positions are modified to phosphothreonine: Thr340 and Thr342. Ser343 carries the post-translational modification Phosphoserine.

Belongs to the G-protein coupled receptor 1 family. Opsin subfamily. In terms of assembly, homodimer. May form a complex composed of RHO, GRK1 and RCVRN in a Ca(2+)-dependent manner; RCVRN prevents the interaction between GRK1 and RHO. Interacts with GRK1. Interacts (phosphorylated form) with SAG. Interacts with GNAT1. Interacts with GNAT3. SAG and G-proteins compete for a common binding site. Interacts with PRCD; the interaction promotes PRCD stability. Forms a complex with ASAP1 and ARF4. Forms a complex with ASAP1, RAB11A, Rabin8/RAB3IP, ARF4 and RAB11FIP3; the complex regulates Golgi-to-cilia rhodopsin/RHO transport in photoreceptors. In terms of processing, contains one covalently linked retinal chromophore. Upon light absorption, the covalently bound 11-cis-retinal is converted to all-trans-retinal. After hydrolysis of the Schiff base and release of the covalently bound all-trans-retinal, active rhodopsin is regenerated by binding of a fresh molecule of 11-cis-retinal.

It localises to the membrane. Its subcellular location is the cell projection. It is found in the cilium. The protein resides in the photoreceptor outer segment. Functionally, photoreceptor required for image-forming vision at low light intensity. Light-induced isomerization of 11-cis to all-trans retinal triggers a conformational change that activates signaling via G-proteins. Signaling mediates the activation of phospholipase C. Subsequent receptor phosphorylation mediates displacement of the bound G-protein alpha subunit by arrestin and terminates signaling. The protein is Rhodopsin (RHO) of Tursiops truncatus (Atlantic bottle-nosed dolphin).